Consider the following 155-residue polypeptide: Fibroblast growth factor 1 (155 aa).

At Ala-2 the chain carries N-acetylalanine. Residues 2–15 (AEGETTTFRALTEK) constitute a propeptide that is removed on maturation. Asn-33 is a binding site for heparin. Residues 127 to 143 (KKNGSSKLGPRTHFGQK) are heparin-binding.

The protein belongs to the heparin-binding growth factors family. As to quaternary structure, monomer. Homodimer. Interacts with FGFR1, FGFR2, FGFR3 and FGFR4. Affinity between fibroblast growth factors (FGFs) and their receptors is increased by heparan sulfate glycosaminoglycans that function as coreceptors. Found in a complex with FGFBP1, FGF1 and FGF2. Interacts with FGFBP1. Part of a Cu(2+)-dependent multiprotein aggregate containing FGF1, S100A13 and SYT1. Interacts with SYT1. Interacts with S100A13. Interacts with LRRC59. Interacts with CSNKA, CSNKB and FIBP. While binding with LRRC59, CSNKA and FIBP seem mutually exclusive, CSNKB and FIBP may cooperatively interact with FGF1. Forms a ternary complex with FGFR1 and ITGAV:ITGB3 and induces the recruitment of PTPN11 to the complex. In terms of processing, in the nucleus, phosphorylated by PKC/PRKCD.

Its subcellular location is the secreted. It is found in the cytoplasm. It localises to the cell cortex. The protein localises to the cytosol. The protein resides in the nucleus. Plays an important role in the regulation of cell survival, cell division, angiogenesis, cell differentiation and cell migration. Functions as a potent mitogen in vitro. Acts as a ligand for FGFR1 and integrins. Binds to FGFR1 in the presence of heparin leading to FGFR1 dimerization and activation via sequential autophosphorylation on tyrosine residues which act as docking sites for interacting proteins, leading to the activation of several signaling cascades. Binds to integrin ITGAV:ITGB3. Its binding to integrin, subsequent ternary complex formation with integrin and FGFR1, and the recruitment of PTPN11 to the complex are essential for FGF1 signaling. Induces the phosphorylation and activation of FGFR1, FRS2, MAPK3/ERK1, MAPK1/ERK2 and AKT1. Can induce angiogenesis. This Ovis aries (Sheep) protein is Fibroblast growth factor 1 (FGF1).